A 639-amino-acid polypeptide reads, in one-letter code: MQQNIERNQVSMTTSRFVWGAVMALVALGSASAAELNLPDGAALYRARCGTCHDNPQDRTPARDVIARNSPAFIMAAMNGVMAPMAAGLSEAEKQAIALHLGARPAGGSQEINPHAIWGPPSASMPLDGPKCKGKIPPIDLSTPDQWNGWGAGITNARFQPNPGLTAADVPRLKVKWAFNYPGSKNGQATVVGDRLFVTSMSGAVYALNAKTGCVYWRHDAAAATRSSVHVVQLPAGAPAQYAIFFSDWTKAAVALDAQTGKQLWKTTIDDQPGVQMTGSPTYHEGKLFVPISSGNEAFATNDQWECCKFRGALVALDALSGKVLWKTYTTQKEPAPFRLNKLGKQMWGPAGGSIWSAPTIDPKRGLVYVATSNSYTEVHHEGSDAVMAMEIETGKVRWINQVTKDDNYIIGCPRAANCPEKVGPDFALGNSPILHTLQDGRQYIVVGQKSGAVYAMDPDNDGELIWMRRVSPGSELGGVEFGMAADAENVYVGISDVITRKGGKPGVYALRIRDGADVWAFPAPRTPCRWNNIFCHPAVSQAVTAMPGVVFAGSMDGHFRAFSTSDGKVLWEFNTAAAPYKTVAGKQADGGVMDGAGPTIAGGMVYVHSGYAGRSTQNAGDLRGREGNVLIAFSVDGK.

The N-terminal stretch at M1–A33 is a signal peptide. The Cytochrome c domain maps to L36–A152. Heme contacts are provided by C49, C52, and H53.

The protein belongs to the bacterial PQQ dehydrogenase family. In terms of assembly, monomer. Pyrroloquinoline quinone serves as cofactor.

Its subcellular location is the cytoplasm. The enzyme catalyses a polyvinyl alcohol + 2n Fe(III)-[cytochrome c] = an oxidized polyvinyl alcohol + 2n Fe(II)-[cytochrome c] + 2n H(+). Catalyzes the oxidation of polyvinyl alcohol (PVA) in the polyvinyl alcohol degradation pathway. The protein is Polyvinylalcohol dehydrogenase (pvaA) of Pseudomonas sp.